The chain runs to 187 residues: Probable chemoreceptor glutamine deamidase CheD (187 aa).

Residues 164 to 187 form a disordered region; sequence APQDVRRPTPPPMPAVASGDVDLF.

This sequence belongs to the CheD family.

The catalysed reaction is L-glutaminyl-[protein] + H2O = L-glutamyl-[protein] + NH4(+). In terms of biological role, probably deamidates glutamine residues to glutamate on methyl-accepting chemotaxis receptors (MCPs), playing an important role in chemotaxis. In Caulobacter vibrioides (strain ATCC 19089 / CIP 103742 / CB 15) (Caulobacter crescentus), this protein is Probable chemoreceptor glutamine deamidase CheD.